Reading from the N-terminus, the 212-residue chain is Ribonuclease HII (212 aa).

Positions 20–209 constitute an RNase H type-2 domain; it reads TCVVGVDEVG…VHNILYQEAS (190 aa). 3 residues coordinate a divalent metal cation: Asp26, Glu27, and Asp117.

It belongs to the RNase HII family. The cofactor is Mn(2+). Requires Mg(2+) as cofactor.

The protein resides in the cytoplasm. It carries out the reaction Endonucleolytic cleavage to 5'-phosphomonoester.. In terms of biological role, endonuclease that specifically degrades the RNA of RNA-DNA hybrids. The protein is Ribonuclease HII of Cereibacter sphaeroides (strain ATCC 17023 / DSM 158 / JCM 6121 / CCUG 31486 / LMG 2827 / NBRC 12203 / NCIMB 8253 / ATH 2.4.1.) (Rhodobacter sphaeroides).